A 230-amino-acid polypeptide reads, in one-letter code: Ribonuclease HII (230 aa).

The RNase H type-2 domain occupies 28–217 (FRIAGIDEAG…VKEHLPSQPD (190 aa)). Asp-34, Glu-35, and Asp-126 together coordinate a divalent metal cation. The disordered stretch occupies residues 209–230 (KEHLPSQPDSDTAGPSTGLFSF). Residues 215-230 (QPDSDTAGPSTGLFSF) are compositionally biased toward polar residues.

This sequence belongs to the RNase HII family. Mn(2+) is required as a cofactor. Mg(2+) serves as cofactor.

The protein localises to the cytoplasm. It carries out the reaction Endonucleolytic cleavage to 5'-phosphomonoester.. Its function is as follows. Endonuclease that specifically degrades the RNA of RNA-DNA hybrids. The protein is Ribonuclease HII of Citrifermentans bemidjiense (strain ATCC BAA-1014 / DSM 16622 / JCM 12645 / Bem) (Geobacter bemidjiensis).